The primary structure comprises 306 residues: Heterogeneous nuclear ribonucleoproteins C1/C2 (306 aa).

Ala2 bears the N-acetylalanine mark. Glycyl lysine isopeptide (Lys-Gly) (interchain with G-Cter in SUMO2) cross-links involve residues Lys8, Lys50, Lys89, and Lys94. Positions 16 to 87 constitute an RRM domain; the sequence is SRVFIGNLNT…QVLDINLAAE (72 aa). 2 positions are modified to phosphoserine: Ser107 and Val108. Thr109 is subject to Phosphothreonine. Phosphoserine is present on residues Ser113, Ser115, and Ser121. Disordered stretches follow at residues 139–190 and 221–306; these read YPAR…KLKG and QSKQ…EDDS. Residues 155–161 carry the Nuclear localization signal motif; it reads PSKRQRV. Phosphoserine is present on residues Ser162 and Ser166. The span at 175-185 shows a compositional bias: low complexity; it reads SKSGQRGSSKS. Lys176 carries the post-translational modification N6-acetyllysine; alternate. Residue Lys176 forms a Glycyl lysine isopeptide (Lys-Gly) (interchain with G-Cter in SUMO2); alternate linkage. Residues 190 to 238 adopt a coiled-coil conformation; that stretch reads GDDLQAIKKELTQIKQKVDSLLENLEKIEKEQSKQAVEMKNDKSEEEQS. A compositionally biased stretch (basic and acidic residues) spans 221–232; sequence QSKQAVEMKNDK. Residues Lys223 and Lys229 each participate in a glycyl lysine isopeptide (Lys-Gly) (interchain with G-Cter in SUMO2) cross-link. Residue Lys232 forms a Glycyl lysine isopeptide (Lys-Gly) (interchain with G-Cter in SUMO2); alternate linkage. Residue Lys232 forms a Glycyl lysine isopeptide (Lys-Gly) (interchain with G-Cter in SUMO1); alternate linkage. Ser233, Ser238, Ser239, and Ser241 each carry phosphoserine. Over residues 242 to 253 the composition is skewed to basic and acidic residues; it reads VKKDETNVKMES. Glycyl lysine isopeptide (Lys-Gly) (interchain with G-Cter in SUMO2) cross-links involve residues Lys243 and Lys244. Lys250 participates in a covalent cross-link: Glycyl lysine isopeptide (Lys-Gly) (interchain with G-Cter in SUMO2); alternate. Residue Lys250 forms a Glycyl lysine isopeptide (Lys-Gly) (interchain with G-Cter in SUMO); alternate linkage. A phosphoserine mark is found at Ser253 and Ser260. Residues 255–276 are compositionally biased toward acidic residues; it reads GGADDSAEEGDLLDDDDNEDRG. Basic and acidic residues predominate over residues 277–287; the sequence is DDQLELIKDDE. Residues 288 to 306 are compositionally biased toward acidic residues; that stretch reads KEAEEGEDDRDSANGEDDS. Phosphoserine is present on residues Ser299 and Ser306.

The protein belongs to the RRM HNRPC family. RALY subfamily. Tetramer composed of 3 copies of isoform C1 and 1 copy of isoform C2. Assembly of 3 tetramers with bound pre-mRNA gives rise to a 19S complex that interacts with HNRNPA2B1 tetramers. Component of the 40S hnRNP particle. Identified in the spliceosome C complex. Interacts with IGF2BP1. Interacts with DHX9; this interaction is direct, enhanced probably by their concomitant binding to RNA and mediates the attachment to actin filaments. Interacts with PPIA/CYPA. Interacts with YWHAE. Post-translationally, phosphorylated on Ser-260 and Ser-299 in resting cells. Phosphorylated on Ser-253 and on 1 serine residue in the poly-Ser stretch at position 238 in response to hydrogen peroxide. Sumoylated. Sumoylation reduces affinity for mRNA. In terms of processing, ubiquitinated and degraded after nucleo-cytoplasmic transport by YWHAE.

The protein resides in the nucleus. Binds pre-mRNA and nucleates the assembly of 40S hnRNP particles. Interacts with poly-U tracts in the 3'-UTR or 5'-UTR of mRNA and modulates the stability and the level of translation of bound mRNA molecules. Single HNRNPC tetramers bind 230-240 nucleotides. Trimers of HNRNPC tetramers bind 700 nucleotides. May play a role in the early steps of spliceosome assembly and pre-mRNA splicing. N6-methyladenosine (m6A) has been shown to alter the local structure in mRNAs and long non-coding RNAs (lncRNAs) via a mechanism named 'm(6)A-switch', facilitating binding of HNRNPC, leading to regulation of mRNA splicing. In Homo sapiens (Human), this protein is Heterogeneous nuclear ribonucleoproteins C1/C2 (HNRNPC).